Reading from the N-terminus, the 191-residue chain is Inosine triphosphate pyrophosphatase (191 aa).

Residue 15–20 participates in ITP binding; it reads TGNANK. Glutamate 43 lines the Mg(2+) pocket. Residues lysine 55, 71 to 72, lysine 88, 147 to 150, lysine 168, and 173 to 174 each bind ITP; these read DT, FGWD, and HR.

The protein belongs to the HAM1 NTPase family. As to quaternary structure, homodimer. Requires Mg(2+) as cofactor. Mn(2+) serves as cofactor.

The protein localises to the cytoplasm. It is found in the nucleus. It catalyses the reaction ITP + H2O = IMP + diphosphate + H(+). It carries out the reaction dITP + H2O = dIMP + diphosphate + H(+). The enzyme catalyses XTP + H2O = XMP + diphosphate + H(+). Functionally, pyrophosphatase that hydrolyzes non-canonical purine nucleotides such as inosine triphosphate (ITP), deoxyinosine triphosphate (dITP) or xanthosine 5'-triphosphate (XTP) to their respective monophosphate derivatives. The enzyme does not distinguish between the deoxy- and ribose forms. Probably excludes non-canonical purines from RNA and DNA precursor pools, thus preventing their incorporation into RNA and DNA and avoiding chromosomal lesions. This Neurospora crassa (strain ATCC 24698 / 74-OR23-1A / CBS 708.71 / DSM 1257 / FGSC 987) protein is Inosine triphosphate pyrophosphatase.